The sequence spans 475 residues: Ankyrin repeat, SAM and basic leucine zipper domain-containing protein 1 (475 aa).

The interval 1–25 is disordered; the sequence is MAASALRGLPVAGGGESSESEDDGW. Phosphoserine is present on residues Ser17, Ser18, and Ser20. ANK repeat units follow at residues 45-74, 78-107, 110-144, 148-177, 181-210, and 214-243; these read EKKE…SVDS, YGWT…NASF, DKQS…DPNV, RLMT…EVNT, NGYT…NKML, and DGKM…PLEG. Residues 272-334 form the SAM domain; sequence SYTAFGDLEV…KILAALKELQ (63 aa).

As to quaternary structure, interacts with DDX4, PIWIL1, RANBP9 and TDRD1. Expressed exclusively in the testis and ovary and at higher levels in the adult testis compared with the adult ovary.

It is found in the cytoplasm. Its function is as follows. Plays a central role during spermatogenesis by repressing transposable elements and preventing their mobilization, which is essential for the germline integrity. Acts via the piRNA metabolic process, which mediates the repression of transposable elements during meiosis by forming complexes composed of piRNAs and Piwi proteins and governs the methylation and subsequent repression of transposons. Its association with pi-bodies suggests a participation in the primary piRNAs metabolic process. Required prior to the pachytene stage to facilitate the production of multiple types of piRNAs, including those associated with repeats involved in the regulation of retrotransposons. May act by mediating protein-protein interactions during germ cell maturation. This is Ankyrin repeat, SAM and basic leucine zipper domain-containing protein 1 from Homo sapiens (Human).